Consider the following 1418-residue polypeptide: Alpha-latrotoxin-Lhe1a (1418 aa).

Positions 1–20 (MIFVGETMERANHSLVRLRR) are cleaved as a signal peptide. The tract at residues 17-20 (RLRR) is furin-like endopeptidase recognition region. Residues 238–257 (VLYALLYGTQTYISVMFFLL) are helix H8 is the probable transmembrane region of the tetrameric pore inserted in the target cell membrane. Cysteine 413 and cysteine 1066 are disulfide-bonded. ANK repeat units lie at residues 458 to 489 (LYNAASNPDSAVGFKEFTKLNYDGANIRATFD), 490 to 521 (QGRTIFHAVAKSGNDKILFGLTFLVKSTELNQ), 525 to 554 (KGYTPIHVAADSGNAGIVNLLIQRGVSINS), 559 to 589 (FLQTPLHLAAQRGFVNTFQRLMESSEININE), 593 to 622 (DGFTPLHYAVRGGERILEAFMNQIGIDVNA), 626 to 656 (KGLTPFHLAIIKNDWQVASTLLRNKKVDINA), 660 to 690 (NNMTALHYAAILGYLETTKQLINLKEINANV), 695 to 723 (GLLSALHYAILYKHDDVASFLLRSSNVNV), 729 to 758 (GGITPLHLAVMQGRKQVLSLMFNIGVNIEQ), 762 to 791 (EKYTPLHLAAMSKYPELIQILLDQDSNFEA), 795 to 824 (SGATPLHLATFKGKSQAALILLNNEVNWRD), 828 to 857 (NGQMPIHGAATTGLLDVAQAIISIDATVLD), 862 to 891 (NSDTPLNLAAQNSHIDAVKYFIDQGADINT), 895 to 924 (NGHAPLLAFSKKGNLDMVKYLFDKNANVYI), 928 to 957 (NGMNFFYYAVRNGHLNIIKYAMSEKDKFEW), 971 to 1003 (EECAISHFAVCDAVQFDKIEIVKFFIGTLGNFN), 1004 to 1033 (ICGPLHQAARYGHLHIVKYLVEEEVLSVDG), 1035 to 1064 (KTDTPLCYASENGHLAVVQYLVSNGAKVNH), 1068 to 1097 (NGMTAIDKAITKNHLQVVQFLAANGVDFRR), 1101 to 1131 (RGATPFLTAVAENAFDIAEYLIREKRQDINI), 1137 to 1166 (DKETALHLAVYYKNLQMIKLLVKYGIDVTI), and 1170 to 1199 (YDKTVLDIATDAKFSNIVKYLKKNSGKFRR). The tract at residues 1026–1032 (EEVLSVD) is 4C4.1 epitope. The interval 1196–1199 (KFRR) is furin-like endopeptidase recognition region. Residues 1200 to 1418 (EYKSSYGEHS…SEKKIQKISI (219 aa)) constitute a propeptide that is removed on maturation.

Belongs to the cationic peptide 01 (latrotoxin) family. 03 (alpha-latrotoxin) subfamily. As to quaternary structure, homotetramer in membranes. In terms of processing, processed by furin-like proteases at both the N- and C-termini. In terms of tissue distribution, expressed in venom gland, cephalothorax, and abdomen tissues from both males and females.

It localises to the secreted. The protein localises to the target cell membrane. Functionally, presynaptic neurotoxin that causes massive release of neurotransmitters from vertebrate (but not invertebrate) nerve terminals and endocrine cells via a complex mechanism involving activation of receptor(s) and toxin insertion into the plasma membrane with subsequent pore formation. Binds to neurexin-1-alpha (NRXN1) in a calcium dependent manner, adhesion G protein-coupled receptor L1 (ADGRL1, also termed latrophilin-1 and calcium-independent receptor of latrotoxin (CIRL)), and receptor-type tyrosine-protein phosphatase S (PTPRS), also termed PTP sigma. NRXN1 and PTPRS are suggested to provide a platform for binding and subsequent pore formation events. In contrast, binding to ADGRL1 does not involve oligomerization and channel formation, but direct downstream stimulation of the synaptic fusion machinery. The protein is Alpha-latrotoxin-Lhe1a of Latrodectus hesperus (Western black widow spider).